The chain runs to 473 residues: Putative amidase AmiC (473 aa).

Catalysis depends on charge relay system residues lysine 82 and serine 157. The active-site Acyl-ester intermediate is the serine 181.

Belongs to the amidase family.

The catalysed reaction is a monocarboxylic acid amide + H2O = a monocarboxylate + NH4(+). In Mycobacterium bovis (strain ATCC BAA-935 / AF2122/97), this protein is Putative amidase AmiC (amiC).